Reading from the N-terminus, the 726-residue chain is Dipeptidyl-peptidase 5 (726 aa).

The first 19 residues, 1–19 (MAAAKWLIASLAFASSGLA), serve as a signal peptide directing secretion. N-linked (GlcNAc...) asparagine glycans are attached at residues asparagine 96 and asparagine 252. The tract at residues 269–291 (AEPINKRNGPRTPQAIEGASSSP) is disordered. The Charge relay system role is filled by serine 558. Asparagine 605 is a glycosylation site (N-linked (GlcNAc...) asparagine). Residues aspartate 641 and histidine 673 each act as charge relay system in the active site. N-linked (GlcNAc...) asparagine glycosylation is present at asparagine 699.

Belongs to the peptidase S9C family.

It is found in the secreted. Its function is as follows. Extracellular dipeptidyl-peptidase which removes N-terminal dipeptides sequentially from polypeptides having unsubstituted N-termini. Contributes to pathogenicity. The sequence is that of Dipeptidyl-peptidase 5 (DPP5) from Trichophyton equinum (Horse ringworm fungus).